A 432-amino-acid polypeptide reads, in one-letter code: UDP-N-acetylmuramate--L-alanine ligase (432 aa).

ATP is bound at residue 108–114 (GAHGKTS).

This sequence belongs to the MurCDEF family.

The protein localises to the cytoplasm. The enzyme catalyses UDP-N-acetyl-alpha-D-muramate + L-alanine + ATP = UDP-N-acetyl-alpha-D-muramoyl-L-alanine + ADP + phosphate + H(+). It functions in the pathway cell wall biogenesis; peptidoglycan biosynthesis. Its function is as follows. Cell wall formation. The protein is UDP-N-acetylmuramate--L-alanine ligase of Bacillus velezensis (strain DSM 23117 / BGSC 10A6 / LMG 26770 / FZB42) (Bacillus amyloliquefaciens subsp. plantarum).